Reading from the N-terminus, the 373-residue chain is Eukaryotic translation initiation factor 3 subunit M (373 aa).

At serine 2 the chain carries N-acetylserine. Phosphoserine is present on residues serine 2 and serine 152. Positions 180–338 constitute a PCI domain; that stretch reads AASKVMVELL…RKVVVSHSTH (159 aa). Lysine 253 carries the N6-acetyllysine modification. Phosphoserine is present on serine 366.

It belongs to the eIF-3 subunit M family. In terms of assembly, component of the eukaryotic translation initiation factor 3 (eIF-3) complex, which is composed of 13 subunits: EIF3A, EIF3B, EIF3C, EIF3D, EIF3E, EIF3F, EIF3G, EIF3H, EIF3I, EIF3J, EIF3K, EIF3L and EIF3M. The eIF-3 complex appears to include 3 stable modules: module A is composed of EIF3A, EIF3B, EIF3G and EIF3I; module B is composed of EIF3F, EIF3H, and EIF3M; and module C is composed of EIF3C, EIF3D, EIF3E, EIF3K and EIF3L. EIF3C of module C binds EIF3B of module A and EIF3H of module B, thereby linking the three modules. EIF3J is a labile subunit that binds to the eIF-3 complex via EIF3B. The eIF-3 complex interacts with RPS6KB1 under conditions of nutrient depletion. Mitogenic stimulation leads to binding and activation of a complex composed of MTOR and RPTOR, leading to phosphorylation and release of RPS6KB1 and binding of EIF4B to eIF-3.

Its subcellular location is the cytoplasm. Functionally, component of the eukaryotic translation initiation factor 3 (eIF-3) complex, which is required for several steps in the initiation of protein synthesis. The eIF-3 complex associates with the 40S ribosome and facilitates the recruitment of eIF-1, eIF-1A, eIF-2:GTP:methionyl-tRNAi and eIF-5 to form the 43S pre-initiation complex (43S PIC). The eIF-3 complex stimulates mRNA recruitment to the 43S PIC and scanning of the mRNA for AUG recognition. The eIF-3 complex is also required for disassembly and recycling of post-termination ribosomal complexes and subsequently prevents premature joining of the 40S and 60S ribosomal subunits prior to initiation. The eIF-3 complex specifically targets and initiates translation of a subset of mRNAs involved in cell proliferation, including cell cycling, differentiation and apoptosis, and uses different modes of RNA stem-loop binding to exert either translational activation or repression. This chain is Eukaryotic translation initiation factor 3 subunit M, found in Bos taurus (Bovine).